The sequence spans 155 residues: MNHLGDIMKNSLKVEPIENGTVIDHIKQGKALNVYNALDIKKDKTITIAMNVPSGKNHKKDILKIEGIELSKYDVDKISLISPNATINIIKNKIVINKFKVEIPNTIEGILKCTNPNCITNIENVAGKFDVEGREPLKIRCFYCEKFLNSIEVYK.

Cys113, Cys118, Cys141, and Cys144 together coordinate Zn(2+).

It belongs to the PyrI family. Contains catalytic and regulatory chains. Zn(2+) is required as a cofactor.

Involved in allosteric regulation of aspartate carbamoyltransferase. This is Aspartate carbamoyltransferase regulatory chain from Methanococcus aeolicus (strain ATCC BAA-1280 / DSM 17508 / OCM 812 / Nankai-3).